The sequence spans 197 residues: Transcription factor FapR (197 aa).

This sequence belongs to the FapR family.

Its function is as follows. Transcriptional factor involved in regulation of membrane lipid biosynthesis by repressing genes involved in fatty acid and phospholipid metabolism. The protein is Transcription factor FapR of Bacillus cytotoxicus (strain DSM 22905 / CIP 110041 / 391-98 / NVH 391-98).